We begin with the raw amino-acid sequence, 391 residues long: Putative ABC transporter glucose-binding protein TsgA13 (391 aa).

The first 28 residues, 1–28 (MLDEESSIQRRDVLSALGAAGVTTLAGC), serve as a signal peptide directing secretion. The interval 24 to 71 (TLAGCTGGDTGDTDDTEASETTASEGTTSGTTTGDVETTDGGGPSEGE) is disordered. Residues 42–59 (SETTASEGTTSGTTTGDV) show a composition bias toward low complexity.

The protein belongs to the BMP lipoprotein family. The complex is composed of two ATP-binding proteins (TsgD13), two transmembrane proteins (TsgB13 and TsgC13) and a solute-binding protein (TsgA13).

Functionally, part of an ABC transporter complex involved in glucose import. This Haloferax volcanii (strain ATCC 29605 / DSM 3757 / JCM 8879 / NBRC 14742 / NCIMB 2012 / VKM B-1768 / DS2) (Halobacterium volcanii) protein is Putative ABC transporter glucose-binding protein TsgA13 (tsgA13).